The following is a 531-amino-acid chain: Histone-arginine methyltransferase CARMER (531 aa).

In terms of domain architecture, SAM-dependent MTase PRMT-type spans 141-450 (ASQYFQFYGY…QSYDVTIDLH (310 aa)). Residues Gln154, Arg163, Gly187, Glu209, Glu238, and Thr266 each coordinate S-adenosyl-L-methionine. Arg501 is subject to Asymmetric dimethylarginine; by autocatalysis.

This sequence belongs to the class I-like SAM-binding methyltransferase superfamily. Protein arginine N-methyltransferase family. In terms of assembly, homodimer. The dimethylated protein is the major form.

It localises to the cytoplasm. It is found in the nucleus. The enzyme catalyses L-arginyl-[protein] + 2 S-adenosyl-L-methionine = N(omega),N(omega)-dimethyl-L-arginyl-[protein] + 2 S-adenosyl-L-homocysteine + 2 H(+). In terms of biological role, methylates (mono- and asymmetric dimethylation) the guanidino nitrogens of arginyl residues in proteins. May methylate histone H3 at 'Arg-17' and activate transcription via chromatin remodeling. The protein is Histone-arginine methyltransferase CARMER (Art4) of Drosophila persimilis (Fruit fly).